We begin with the raw amino-acid sequence, 189 residues long: uncharacterized protein (189 aa).

3 helical membrane-spanning segments follow: residues 2–22 (LVVV…HHLL), 93–113 (ILFY…YFIL), and 116–136 (FYST…LHTL).

The protein resides in the membrane. This is an uncharacterized protein from Schizosaccharomyces pombe (strain 972 / ATCC 24843) (Fission yeast).